The sequence spans 393 residues: S-adenosylmethionine synthase 4 (393 aa).

E9 is a binding site for Mg(2+). An ATP-binding site is contributed by H15. E43 contacts K(+). L-methionine-binding residues include E56 and Q99. ATP-binding positions include 167–169, 235–238, D246, 252–253, A269, K273, and K277; these read DGK, SGRF, and RK. L-methionine is bound at residue D246. K277 provides a ligand contact to L-methionine.

Belongs to the AdoMet synthase family. Homotetramer. It depends on Mn(2+) as a cofactor. Mg(2+) serves as cofactor. Requires Co(2+) as cofactor. K(+) is required as a cofactor. In terms of tissue distribution, detected in trichomes (at the protein level).

It is found in the cytoplasm. The enzyme catalyses L-methionine + ATP + H2O = S-adenosyl-L-methionine + phosphate + diphosphate. The protein operates within amino-acid biosynthesis; S-adenosyl-L-methionine biosynthesis; S-adenosyl-L-methionine from L-methionine: step 1/1. In terms of biological role, catalyzes the formation of S-adenosylmethionine from methionine and ATP. The reaction comprises two steps that are both catalyzed by the same enzyme: formation of S-adenosylmethionine (AdoMet) and triphosphate, and subsequent hydrolysis of the triphosphate. The polypeptide is S-adenosylmethionine synthase 4 (METK4) (Arabidopsis thaliana (Mouse-ear cress)).